A 306-amino-acid chain; its full sequence is Protoheme IX farnesyltransferase (306 aa).

8 consecutive transmembrane segments (helical) span residues 31 to 50, 55 to 77, 104 to 124, 125 to 145, 168 to 188, 218 to 235, 238 to 258, and 286 to 306; these read VIEL…QGGW, LILG…NCYI, LVFA…ISNW, LAAA…TLWL, WAAV…IVFL, GRAA…ATLA, LLLI…LAGG, and ASIS…LLPF.

It belongs to the UbiA prenyltransferase family. Protoheme IX farnesyltransferase subfamily.

It is found in the cell membrane. It catalyses the reaction heme b + (2E,6E)-farnesyl diphosphate + H2O = Fe(II)-heme o + diphosphate. The protein operates within porphyrin-containing compound metabolism; heme O biosynthesis; heme O from protoheme: step 1/1. Its function is as follows. Converts heme B (protoheme IX) to heme O by substitution of the vinyl group on carbon 2 of heme B porphyrin ring with a hydroxyethyl farnesyl side group. The sequence is that of Protoheme IX farnesyltransferase from Clavibacter michiganensis subsp. michiganensis (strain NCPPB 382).